The sequence spans 343 residues: Heat-inducible transcription repressor HrcA (343 aa).

This sequence belongs to the HrcA family.

Its function is as follows. Negative regulator of class I heat shock genes (grpE-dnaK-dnaJ and groELS operons). Prevents heat-shock induction of these operons. This is Heat-inducible transcription repressor HrcA from Bacillus licheniformis (strain ATCC 14580 / DSM 13 / JCM 2505 / CCUG 7422 / NBRC 12200 / NCIMB 9375 / NCTC 10341 / NRRL NRS-1264 / Gibson 46).